The primary structure comprises 227 residues: PKHD-type hydroxylase M446_1130 (227 aa).

Residues 78–178 (QIFPPLFNRY…RVASFFWLQS (101 aa)) form the Fe2OG dioxygenase domain. The Fe cation site is built by histidine 96, aspartate 98, and histidine 159. Arginine 169 contacts 2-oxoglutarate.

It depends on Fe(2+) as a cofactor. The cofactor is L-ascorbate.

The protein is PKHD-type hydroxylase M446_1130 of Methylobacterium sp. (strain 4-46).